A 524-amino-acid chain; its full sequence is Bifunctional purine biosynthesis protein PurH (524 aa).

The MGS-like domain occupies 1–154 (MTRLALLSTS…KNHAHVTVLC (154 aa)).

Belongs to the PurH family.

The enzyme catalyses (6R)-10-formyltetrahydrofolate + 5-amino-1-(5-phospho-beta-D-ribosyl)imidazole-4-carboxamide = 5-formamido-1-(5-phospho-D-ribosyl)imidazole-4-carboxamide + (6S)-5,6,7,8-tetrahydrofolate. The catalysed reaction is IMP + H2O = 5-formamido-1-(5-phospho-D-ribosyl)imidazole-4-carboxamide. It participates in purine metabolism; IMP biosynthesis via de novo pathway; 5-formamido-1-(5-phospho-D-ribosyl)imidazole-4-carboxamide from 5-amino-1-(5-phospho-D-ribosyl)imidazole-4-carboxamide (10-formyl THF route): step 1/1. The protein operates within purine metabolism; IMP biosynthesis via de novo pathway; IMP from 5-formamido-1-(5-phospho-D-ribosyl)imidazole-4-carboxamide: step 1/1. This chain is Bifunctional purine biosynthesis protein PurH, found in Acaryochloris marina (strain MBIC 11017).